A 79-amino-acid polypeptide reads, in one-letter code: Schistosomin (79 aa).

Post-translationally, contains four disulfide bonds. As to expression, growth-controlling neurosecretory light green cells, in the cerebral ganglia of the CNS.

It is found in the secreted. Anti-gonadotropic neuropeptide. It also decreases the binding capacity of calfluxin to membrane-bound receptors of the albumen gland. This leads to inhibition of the reproductive activities of the infected snail. The protein is Schistosomin of Lymnaea stagnalis (Great pond snail).